We begin with the raw amino-acid sequence, 950 residues long: Protocadherin alpha-13 (950 aa).

The signal sequence occupies residues 1–29 (MLSSWQGGPRPRQLLLWLLILAAWETGSG). The Extracellular segment spans residues 30 to 697 (QLHYSVPEEA…GPEAALVDVN (668 aa)). Cadherin domains lie at 34–133 (SVPE…PPIF), 134–242 (PESK…APEF), 243–350 (YQSV…APEV), 351–455 (TITS…APAF), 456–565 (AQPE…APAL), and 581–678 (MPRS…APQA). N-linked (GlcNAc...) asparagine glycosylation is found at Asn257 and Asn265. N-linked (GlcNAc...) asparagine glycosylation is present at Asn548. Residues 698-718 (VYLIIAICAVSSLLVLTLLLY) form a helical membrane-spanning segment. The Cytoplasmic segment spans residues 719–950 (TALRCSAPPT…GNSTTDNSDQ (232 aa)). 6 PXXP repeats span residues 734 to 737 (PGKP), 774 to 777 (PSLP), 799 to 802 (PRQP), 832 to 835 (PGGP), 873 to 876 (PGNP), and 891 to 894 (PGSP). The interval 734–894 (PGKPTLVCSS…PDKFIIPGSP (161 aa)) is 6 X 4 AA repeats of P-X-X-P. Disordered regions lie at residues 780–806 (LGSA…NPDW) and 829–950 (RAGP…NSDQ). A compositionally biased stretch (basic and acidic residues) spans 787 to 800 (GQREEDSECLKEPR). Residues 909–923 (DKSDFITFGKKEETK) are compositionally biased toward basic and acidic residues.

It localises to the cell membrane. In terms of biological role, potential calcium-dependent cell-adhesion protein. May be involved in the establishment and maintenance of specific neuronal connections in the brain. This is Protocadherin alpha-13 (PCDHA13) from Homo sapiens (Human).